A 297-amino-acid polypeptide reads, in one-letter code: 2,3,4,5-tetrahydropyridine-2,6-dicarboxylate N-succinyltransferase (297 aa).

Asp-148 and Glu-165 together coordinate Mg(2+). The Acyl-anhydride intermediate role is filled by Glu-181. Succinyl-CoA contacts are provided by residues Arg-183, Gly-198, Ser-201, Ala-224, 239 to 240 (EA), Gly-247, Lys-258, and 271 to 274 (RRDS).

The protein belongs to the type 2 tetrahydrodipicolinate N-succinyltransferase family. As to quaternary structure, homotrimer.

It is found in the cytoplasm. The catalysed reaction is (S)-2,3,4,5-tetrahydrodipicolinate + succinyl-CoA + H2O = (S)-2-succinylamino-6-oxoheptanedioate + CoA. The protein operates within amino-acid biosynthesis; L-lysine biosynthesis via DAP pathway; LL-2,6-diaminopimelate from (S)-tetrahydrodipicolinate (succinylase route): step 1/3. Its function is as follows. Catalyzes the conversion of the cyclic tetrahydrodipicolinate (THDP) into the acyclic N-succinyl-L-2-amino-6-oxopimelate using succinyl-CoA. The protein is 2,3,4,5-tetrahydropyridine-2,6-dicarboxylate N-succinyltransferase of Corynebacterium glutamicum (strain ATCC 13032 / DSM 20300 / JCM 1318 / BCRC 11384 / CCUG 27702 / LMG 3730 / NBRC 12168 / NCIMB 10025 / NRRL B-2784 / 534).